The primary structure comprises 145 residues: uncharacterized protein (145 aa).

Residues 46–66 (FFFLFFLFFFFFFTFQFLVAF) form a helical membrane-spanning segment.

It is found in the membrane. This is an uncharacterized protein from Saccharomyces cerevisiae (strain ATCC 204508 / S288c) (Baker's yeast).